The sequence spans 960 residues: Valine--tRNA ligase (960 aa).

Residues 42–52 carry the 'HIGH' region motif; the sequence is PNITGNLHMGH. Residues 553–557 carry the 'KMSKS' region motif; that stretch reads KMSKS. Lysine 556 contributes to the ATP binding site. Positions 879-950 form a coiled coil; that stretch reads VLKAIDKEIE…LSQQLESLHD (72 aa).

Belongs to the class-I aminoacyl-tRNA synthetase family. ValS type 1 subfamily. In terms of assembly, monomer.

It is found in the cytoplasm. The catalysed reaction is tRNA(Val) + L-valine + ATP = L-valyl-tRNA(Val) + AMP + diphosphate. Functionally, catalyzes the attachment of valine to tRNA(Val). As ValRS can inadvertently accommodate and process structurally similar amino acids such as threonine, to avoid such errors, it has a 'posttransfer' editing activity that hydrolyzes mischarged Thr-tRNA(Val) in a tRNA-dependent manner. The sequence is that of Valine--tRNA ligase from Buchnera aphidicola subsp. Schizaphis graminum (strain Sg).